We begin with the raw amino-acid sequence, 456 residues long: Anthocyanidin 3-O-galactosyltransferase F3GT1 (456 aa).

An anthocyanidin contacts are provided by Ser-20, His-22, and Gln-83. His-22 (proton acceptor) is an active-site residue. Asp-118 (charge relay) is an active-site residue. Residue His-150 participates in an anthocyanidin binding. 7 residues coordinate UDP: Ser-281, Trp-333, Ala-334, His-351, Asn-355, Ser-356, and Glu-359. Gly-374 provides a ligand contact to an anthocyanidin.

It belongs to the UDP-glycosyltransferase family. As to expression, expressed at low levels in stems and leaves. Expressed in ovaries.

It catalyses the reaction cyanidin + UDP-alpha-D-galactose = cyanidin 3-O-beta-D-galactoside + UDP + H(+). It participates in pigment biosynthesis; anthocyanin biosynthesis. In terms of biological role, involved in anthocyanin biosynthesis by catalyzing the galactosylation of cyanidin. Required for the accumulation of anthocyanin in red-fleshed kiwifruit varieties. Seems to be the key enzyme regulating the accumulation of anthocyanin in red-fleshed kiwi fruits. The protein is Anthocyanidin 3-O-galactosyltransferase F3GT1 of Actinidia chinensis var. chinensis (Chinese soft-hair kiwi).